The chain runs to 266 residues: Isoprenyl transferase (266 aa).

Residue Asp-36 is part of the active site. Asp-36 contacts Mg(2+). Substrate contacts are provided by residues 37 to 40 (GNGR), Trp-41, Arg-49, His-53, and 81 to 83 (STE). Asn-84 acts as the Proton acceptor in catalysis. Residues Trp-85, Arg-87, Arg-204, and 210 to 212 (RIS) contribute to the substrate site. Glu-223 provides a ligand contact to Mg(2+).

It belongs to the UPP synthase family. Homodimer. It depends on Mg(2+) as a cofactor.

Functionally, catalyzes the condensation of isopentenyl diphosphate (IPP) with allylic pyrophosphates generating different type of terpenoids. This chain is Isoprenyl transferase, found in Prochlorococcus marinus (strain SARG / CCMP1375 / SS120).